A 957-amino-acid polypeptide reads, in one-letter code: Glycine dehydrogenase (decarboxylating) (957 aa).

The residue at position 708 (Lys708) is an N6-(pyridoxal phosphate)lysine.

This sequence belongs to the GcvP family. In terms of assembly, the glycine cleavage system is composed of four proteins: P, T, L and H. The cofactor is pyridoxal 5'-phosphate.

It catalyses the reaction N(6)-[(R)-lipoyl]-L-lysyl-[glycine-cleavage complex H protein] + glycine + H(+) = N(6)-[(R)-S(8)-aminomethyldihydrolipoyl]-L-lysyl-[glycine-cleavage complex H protein] + CO2. Its function is as follows. The glycine cleavage system catalyzes the degradation of glycine. The P protein binds the alpha-amino group of glycine through its pyridoxal phosphate cofactor; CO(2) is released and the remaining methylamine moiety is then transferred to the lipoamide cofactor of the H protein. The polypeptide is Glycine dehydrogenase (decarboxylating) (Shigella flexneri).